The chain runs to 676 residues: Multisubstrate pseudouridine synthase 7 (676 aa).

Disordered stretches follow at residues 1–27 (MSDSSEATVKRPLDAHVGPSENAAKKL) and 87–110 (KMPKKPQRSKEEVNAEKESEAARR). Residue serine 2 is modified to N-acetylserine. Basic and acidic residues predominate over residues 94–110 (RSKEEVNAEKESEAARR). The active-site Nucleophile is aspartate 256. The TRUD domain maps to 338–582 (GFINYFGMQR…AGSYRTVIQK (245 aa)).

It belongs to the pseudouridine synthase TruD family.

It localises to the nucleus. Its subcellular location is the cytoplasm. It catalyses the reaction uridine in 5S rRNA = pseudouridine in 5S rRNA. The enzyme catalyses uridine in snRNA = pseudouridine in snRNA. The catalysed reaction is uridine(13) in tRNA = pseudouridine(13) in tRNA. It carries out the reaction a uridine in mRNA = a pseudouridine in mRNA. In terms of biological role, catalyzes pseudouridylation at position 35 in U2 snRNA stem-loop II region which induces particular conformation of the mRNA-U2 snRNA duplex and places the nucleophile in an accessible position for the first step of splicing. Also catalyzes pseudouridylation at position 56 in U2 snRNA. Also catalyzes pseudouridylation at position 50 in 5S rRNA, position 13 in cytoplasmic tRNAs, and position 35 in pre-tRNA(Tyr). Pseudouridine residues in tRNAs may stabilize the local RNA conformation, favor interactions with protein partners and play an important role in the stabilization of the codon-anticodon interaction with mRNA. Also catalyzes pseudouridylation of mRNAs in response to heat shock: mediates pseudouridylation of mRNAs with the consensus sequence 5'-UGUAR-3'. The sequence is that of Multisubstrate pseudouridine synthase 7 from Saccharomyces cerevisiae (strain ATCC 204508 / S288c) (Baker's yeast).